The sequence spans 79 residues: Cell division protein ZapB (79 aa).

Residues 3–79 (LEVFEKLEAK…QALLGRMEEV (77 aa)) adopt a coiled-coil conformation. The residue at position 8 (Lys-8) is an N6-acetyllysine. Residues 34–65 (NNSLSQEVQNAQHQREELERENNHLKEQQNGW) form a disordered region. Over residues 35 to 45 (NSLSQEVQNAQ) the composition is skewed to polar residues. Residues 46-60 (HQREELERENNHLKE) are compositionally biased toward basic and acidic residues.

This sequence belongs to the ZapB family. In terms of assembly, homodimer. The ends of the coiled-coil dimer bind to each other, forming polymers. Interacts with FtsZ.

It is found in the cytoplasm. Its function is as follows. Non-essential, abundant cell division factor that is required for proper Z-ring formation. It is recruited early to the divisome by direct interaction with FtsZ, stimulating Z-ring assembly and thereby promoting cell division earlier in the cell cycle. Its recruitment to the Z-ring requires functional FtsA or ZipA. The sequence is that of Cell division protein ZapB from Shigella boydii serotype 18 (strain CDC 3083-94 / BS512).